Consider the following 852-residue polypeptide: Lon protease homolog 2, peroxisomal (852 aa).

The residue at position 2 (serine 2) is an N-acetylserine. A Lon N-terminal domain is found at leucine 13–isoleucine 222. Glycine 375–threonine 382 provides a ligand contact to ATP. The Lon proteolytic domain occupies leucine 651 to glycine 837. Active-site residues include serine 743 and lysine 786. Residues serine 850–leucine 852 carry the Microbody targeting signal motif.

It belongs to the peptidase S16 family. In terms of assembly, interacts with PEX5. Interacts with TYSND1. May interact with enzymes involved in beta-oxidation of fatty acids, including ACOX1/AOX.

It localises to the peroxisome matrix. The catalysed reaction is Hydrolysis of proteins in presence of ATP.. In terms of biological role, ATP-dependent serine protease that mediates the selective degradation of misfolded and unassembled polypeptides in the peroxisomal matrix. Necessary for type 2 peroxisome targeting signal (PTS2)-containing protein processing and facilitates peroxisome matrix protein import. May indirectly regulate peroxisomal fatty acid beta-oxidation through degradation of the self-processed forms of TYSND1. The sequence is that of Lon protease homolog 2, peroxisomal from Pongo abelii (Sumatran orangutan).